Here is a 584-residue protein sequence, read N- to C-terminus: A-type ATP synthase subunit A 2 (584 aa).

An ATP-binding site is contributed by 227–234 (GGFGTGKT).

This sequence belongs to the ATPase alpha/beta chains family. As to quaternary structure, has multiple subunits with at least A(3), B(3), C, D, E, F, H, I and proteolipid K(x).

Its subcellular location is the cell membrane. It catalyses the reaction ATP + H2O + 4 H(+)(in) = ADP + phosphate + 5 H(+)(out). In terms of biological role, component of the A-type ATP synthase that produces ATP from ADP in the presence of a proton gradient across the membrane. The A chain is the catalytic subunit. The chain is A-type ATP synthase subunit A 2 from Methanospirillum hungatei JF-1 (strain ATCC 27890 / DSM 864 / NBRC 100397 / JF-1).